We begin with the raw amino-acid sequence, 1013 residues long: PHD finger protein 20-like protein 1 (1013 aa).

Positions 11-71 constitute a Tudor 1 domain; that stretch reads ITFEIGARLE…SNRLRPLERP (61 aa). Glycyl lysine isopeptide (Lys-Gly) (interchain with G-Cter in SUMO2) cross-links involve residues Lys-75 and Lys-79. The Tudor 2 domain occupies 85 to 141; it reads FDFKAGEEVLARWTDCRYYPAKIEAINKEGTFTVQFYDGVIRCLKRMHIKAMPEDAK. Disordered stretches follow at residues 183–206, 309–368, 389–454, and 482–511; these read AKNK…RDGG, EQAI…TPKS, VINK…QSSV, and VTGS…FANP. Residues 315–346 are compositionally biased toward polar residues; sequence KPQSQKKNEAVISSSANTQKPALLSSTLSSGK. Ser-368 carries the phosphoserine modification. Residues 404-415 show a composition bias toward basic residues; that stretch reads PCKHSERRRRSQ. Ser-432 carries the phosphoserine modification. The segment covering 443 to 453 has biased composition (low complexity); the sequence is SISSQNQQQSS. The segment covering 496–505 has biased composition (basic and acidic residues); that stretch reads ECPREEKEET. A Glycyl lysine isopeptide (Lys-Gly) (interchain with G-Cter in SUMO2) cross-link involves residue Lys-530. The span at 533–565 shows a compositional bias: basic and acidic residues; sequence KKVKLEEKTSTAFGKRKEKDKEKKEKRDKDHYK. The interval 533–585 is disordered; it reads KKVKLEEKTSTAFGKRKEKDKEKKEKRDKDHYKPKQKKKKKKKKKSKQHDYSD. A compositionally biased stretch (basic residues) spans 566-579; it reads PKQKKKKKKKKKSK. The PHD-type zinc finger occupies 681 to 729; sequence IVRCICELDEENGFMIQCEECLCWQHSVCMGLLEDSIPEQYICYICRDP. Positions 824 to 852 are enriched in basic and acidic residues; sequence RKITPQDRANSEGKECVQNHKEPALRMEE. Positions 824–911 are disordered; sequence RKITPQDRAN…LLYKNRGVSE (88 aa). Positions 854 to 878 are enriched in polar residues; sequence YITSEHSYQKPQSFSQDCQSLTDPG. The segment covering 879–892 has biased composition (acidic residues); sequence SSDDDDASSFEEDG. Lys-905 carries the post-translational modification N6-acetyllysine.

In terms of assembly, interacts with methylated DNMT1 (DNMT1K142me1). Interacts with SOX2.

The protein localises to the nucleus. Is a negative regulator of proteasomal degradation of a set of methylated proteins, including DNMT1 and SOX2. Involved in the maintainance of embryonic stem cells pluripotency, through the regulation of SOX2 levels. In Mus musculus (Mouse), this protein is PHD finger protein 20-like protein 1 (Phf20l1).